We begin with the raw amino-acid sequence, 429 residues long: Adenylosuccinate synthetase (429 aa).

GTP contacts are provided by residues 12-18 (GDEGKGK) and 40-42 (GHT). Residue aspartate 13 is the Proton acceptor of the active site. Mg(2+) is bound by residues aspartate 13 and glycine 40. IMP is bound by residues 13 to 16 (DEGK), 38 to 41 (NAGH), threonine 128, arginine 142, glutamine 223, threonine 238, and arginine 302. The active-site Proton donor is histidine 41. Residue 298–304 (VNTGRPR) participates in substrate binding. Residues arginine 304, 330–332 (KLD), and 412–414 (GVG) contribute to the GTP site.

Belongs to the adenylosuccinate synthetase family. As to quaternary structure, homodimer. Requires Mg(2+) as cofactor.

Its subcellular location is the cytoplasm. The enzyme catalyses IMP + L-aspartate + GTP = N(6)-(1,2-dicarboxyethyl)-AMP + GDP + phosphate + 2 H(+). It functions in the pathway purine metabolism; AMP biosynthesis via de novo pathway; AMP from IMP: step 1/2. Functionally, plays an important role in the de novo pathway of purine nucleotide biosynthesis. Catalyzes the first committed step in the biosynthesis of AMP from IMP. In Micrococcus luteus (strain ATCC 4698 / DSM 20030 / JCM 1464 / CCM 169 / CCUG 5858 / IAM 1056 / NBRC 3333 / NCIMB 9278 / NCTC 2665 / VKM Ac-2230) (Micrococcus lysodeikticus), this protein is Adenylosuccinate synthetase.